We begin with the raw amino-acid sequence, 275 residues long: uncharacterized protein (275 aa).

The protein belongs to the MtfA family.

This is an uncharacterized protein from Synechocystis sp. (strain ATCC 27184 / PCC 6803 / Kazusa).